The primary structure comprises 160 residues: Large ribosomal subunit protein uL15 (160 aa).

Residues 1-14 (MKLNDISDNPGSSK) are compositionally biased toward polar residues. The segment at 1-35 (MKLNDISDNPGSSKSRMRVGRGIGSGKGKTCGRGV) is disordered. Positions 21 to 35 (RGIGSGKGKTCGRGV) are enriched in gly residues.

It belongs to the universal ribosomal protein uL15 family. In terms of assembly, part of the 50S ribosomal subunit.

In terms of biological role, binds to the 23S rRNA. The polypeptide is Large ribosomal subunit protein uL15 (Beijerinckia indica subsp. indica (strain ATCC 9039 / DSM 1715 / NCIMB 8712)).